Consider the following 426-residue polypeptide: Tryptophan--tRNA ligase (426 aa).

Positions 66–74 (PSGEMHLGN) match the 'HIGH' region motif. A 'KMSKS' region motif is present at residues 314-318 (KMSSS).

This sequence belongs to the class-I aminoacyl-tRNA synthetase family.

Its subcellular location is the cytoplasm. It catalyses the reaction tRNA(Trp) + L-tryptophan + ATP = L-tryptophyl-tRNA(Trp) + AMP + diphosphate + H(+). The polypeptide is Tryptophan--tRNA ligase (Thermoplasma volcanium (strain ATCC 51530 / DSM 4299 / JCM 9571 / NBRC 15438 / GSS1)).